A 465-amino-acid polypeptide reads, in one-letter code: Probable M18 family aminopeptidase 1 (465 aa).

Residues His105, His180, and His441 each contribute to the Zn(2+) site.

The protein belongs to the peptidase M18 family. Zn(2+) is required as a cofactor.

This chain is Probable M18 family aminopeptidase 1 (apeA), found in Clostridium acetobutylicum (strain ATCC 824 / DSM 792 / JCM 1419 / IAM 19013 / LMG 5710 / NBRC 13948 / NRRL B-527 / VKM B-1787 / 2291 / W).